Reading from the N-terminus, the 377-residue chain is All-trans-retinol dehydrogenase [NAD(+)] ADH4 (377 aa).

Position 47 (Cys-47) interacts with Zn(2+). Thr-49 contributes to the NAD(+) binding site. Zn(2+) is bound by residues His-68, Cys-98, Cys-101, Cys-104, Cys-112, and Cys-179. NAD(+) is bound by residues Gly-204–Gly-209, Asp-228, Lys-233, Val-297–Ala-299, Thr-320–Phe-322, and Arg-372.

This sequence belongs to the zinc-containing alcohol dehydrogenase family. Class-II subfamily. In terms of assembly, dimer. Zn(2+) is required as a cofactor. As to expression, liver specific.

The protein localises to the cytoplasm. It catalyses the reaction all-trans-retinol + NAD(+) = all-trans-retinal + NADH + H(+). It carries out the reaction 9-cis-retinol + NAD(+) = 9-cis-retinal + NADH + H(+). The catalysed reaction is 20-hydroxy-(5Z,8Z,11Z,14Z)-eicosatetraenoate + NAD(+) = 20-oxo-(5Z,8Z,11Z,14Z)-eicosatetraenoate + NADH + H(+). The enzyme catalyses 20-oxo-(5Z,8Z,11Z,14Z)-eicosatetraenoate + NAD(+) + H2O = (5Z,8Z,11Z,14Z)-eicosatetraenedioate + NADH + 2 H(+). It catalyses the reaction 1,4-benzoquinone + NADH + H(+) = hydroquinone + NAD(+). With respect to regulation, oxidation of 20-HETE is inhibited by low concentrations of N-heptylformamide. Oxidation of 20-HETE is a decreased by 55-65% by either all-trans-retinol or all-trans-retinoic acid. Strongly inhibited by omega-hydroxy fatty acids. Catalyzes the NAD-dependent oxidation of either all-trans-retinol or 9-cis-retinol. Also oxidizes long chain omega-hydroxy fatty acids, such as 20-HETE, producing both the intermediate aldehyde, 20-oxoarachidonate and the end product, a dicarboxylic acid, (5Z,8Z,11Z,14Z)-eicosatetraenedioate. Also catalyzes the reduction of benzoquinones. The protein is All-trans-retinol dehydrogenase [NAD(+)] ADH4 of Mus musculus (Mouse).